The chain runs to 92 residues: Small ribosomal subunit protein uS19 (92 aa).

This sequence belongs to the universal ribosomal protein uS19 family.

Protein S19 forms a complex with S13 that binds strongly to the 16S ribosomal RNA. This chain is Small ribosomal subunit protein uS19, found in Crocosphaera subtropica (strain ATCC 51142 / BH68) (Cyanothece sp. (strain ATCC 51142)).